The primary structure comprises 376 residues: Chaperone protein DnaJ (376 aa).

The region spanning 5–70 (DYYEVLGVGR…DKKAAYDQFG (66 aa)) is the J domain. A CR-type zinc finger spans residues 132–210 (GLTKELKVPT…CHGNGRVEKT (79 aa)). Zn(2+)-binding residues include cysteine 145, cysteine 148, cysteine 162, cysteine 165, cysteine 184, cysteine 187, cysteine 198, and cysteine 201. CXXCXGXG motif repeat units follow at residues 145 to 152 (CDSCDGSG), 162 to 169 (CGTCHGMG), 184 to 191 (CPTCHGRG), and 198 to 205 (CSKCHGNG).

This sequence belongs to the DnaJ family. As to quaternary structure, homodimer. Zn(2+) is required as a cofactor.

The protein localises to the cytoplasm. Functionally, participates actively in the response to hyperosmotic and heat shock by preventing the aggregation of stress-denatured proteins and by disaggregating proteins, also in an autonomous, DnaK-independent fashion. Unfolded proteins bind initially to DnaJ; upon interaction with the DnaJ-bound protein, DnaK hydrolyzes its bound ATP, resulting in the formation of a stable complex. GrpE releases ADP from DnaK; ATP binding to DnaK triggers the release of the substrate protein, thus completing the reaction cycle. Several rounds of ATP-dependent interactions between DnaJ, DnaK and GrpE are required for fully efficient folding. Also involved, together with DnaK and GrpE, in the DNA replication of plasmids through activation of initiation proteins. The protein is Chaperone protein DnaJ of Shewanella amazonensis (strain ATCC BAA-1098 / SB2B).